The chain runs to 181 residues: NADH-quinone oxidoreductase subunit I (181 aa).

4Fe-4S ferredoxin-type domains are found at residues 52–81 (TRDS…LKKS) and 91–120 (EFFR…LISD). [4Fe-4S] cluster contacts are provided by C61, C64, C67, C71, C100, C103, C106, and C110.

It belongs to the complex I 23 kDa subunit family. As to quaternary structure, NDH-1 is composed of 13 different subunits. Subunits NuoA, H, J, K, L, M, N constitute the membrane sector of the complex. [4Fe-4S] cluster is required as a cofactor.

The protein localises to the cell inner membrane. It carries out the reaction a quinone + NADH + 5 H(+)(in) = a quinol + NAD(+) + 4 H(+)(out). NDH-1 shuttles electrons from NADH, via FMN and iron-sulfur (Fe-S) centers, to quinones in the respiratory chain. The immediate electron acceptor for the enzyme in this species is believed to be ubiquinone. Couples the redox reaction to proton translocation (for every two electrons transferred, four hydrogen ions are translocated across the cytoplasmic membrane), and thus conserves the redox energy in a proton gradient. In Blochmanniella floridana, this protein is NADH-quinone oxidoreductase subunit I.